Reading from the N-terminus, the 95-residue chain is Co-chaperonin GroES (95 aa).

This sequence belongs to the GroES chaperonin family. Heptamer of 7 subunits arranged in a ring. Interacts with the chaperonin GroEL.

Its subcellular location is the cytoplasm. Its function is as follows. Together with the chaperonin GroEL, plays an essential role in assisting protein folding. The GroEL-GroES system forms a nano-cage that allows encapsulation of the non-native substrate proteins and provides a physical environment optimized to promote and accelerate protein folding. GroES binds to the apical surface of the GroEL ring, thereby capping the opening of the GroEL channel. The chain is Co-chaperonin GroES from Staphylococcus haemolyticus (strain JCSC1435).